Reading from the N-terminus, the 131-residue chain is D-ribose pyranase (131 aa).

The active-site Proton donor is the H20. Residues D28, H98, and Y120–N122 contribute to the substrate site.

It belongs to the RbsD / FucU family. RbsD subfamily. As to quaternary structure, homodecamer.

Its subcellular location is the cytoplasm. The enzyme catalyses beta-D-ribopyranose = beta-D-ribofuranose. Its pathway is carbohydrate metabolism; D-ribose degradation; D-ribose 5-phosphate from beta-D-ribopyranose: step 1/2. Catalyzes the interconversion of beta-pyran and beta-furan forms of D-ribose. The polypeptide is D-ribose pyranase (Bacillus cereus (strain ATCC 10987 / NRS 248)).